The chain runs to 208 residues: High frequency lysogenization protein HflD homolog (208 aa).

This sequence belongs to the HflD family.

It is found in the cytoplasm. Its subcellular location is the cell inner membrane. The protein is High frequency lysogenization protein HflD homolog of Edwardsiella ictaluri (strain 93-146).